The following is a 311-amino-acid chain: Malate dehydrogenase (311 aa).

NAD(+)-binding positions include 7 to 13 (GAAGGIG) and D34. The substrate site is built by R81 and R87. Residues N94 and 117–119 (ITN) contribute to the NAD(+) site. N119 and R153 together coordinate substrate. Residue H177 is the Proton acceptor of the active site. Position 227 (M227) interacts with NAD(+).

Belongs to the LDH/MDH superfamily. MDH type 1 family. As to quaternary structure, homodimer.

It carries out the reaction (S)-malate + NAD(+) = oxaloacetate + NADH + H(+). Functionally, catalyzes the reversible oxidation of malate to oxaloacetate. This Aeromonas salmonicida (strain A449) protein is Malate dehydrogenase.